We begin with the raw amino-acid sequence, 312 residues long: DNA-directed RNA polymerase subunit alpha (312 aa).

The segment at 1 to 226 (MIEFEKPIIT…EHLNLFTDLT (226 aa)) is alpha N-terminal domain (alpha-NTD). The tract at residues 242-312 (NDEKLLDRTI…DLGLGLKNDK (71 aa)) is alpha C-terminal domain (alpha-CTD).

This sequence belongs to the RNA polymerase alpha chain family. In terms of assembly, homodimer. The RNAP catalytic core consists of 2 alpha, 1 beta, 1 beta' and 1 omega subunit. When a sigma factor is associated with the core the holoenzyme is formed, which can initiate transcription.

The enzyme catalyses RNA(n) + a ribonucleoside 5'-triphosphate = RNA(n+1) + diphosphate. DNA-dependent RNA polymerase catalyzes the transcription of DNA into RNA using the four ribonucleoside triphosphates as substrates. This is DNA-directed RNA polymerase subunit alpha from Streptococcus thermophilus (strain CNRZ 1066).